We begin with the raw amino-acid sequence, 343 residues long: D-beta-hydroxybutyrate dehydrogenase, mitochondrial (343 aa).

Residues 1 to 46 (MLAARLSRPLSQLPGKALSVCDRENGTRHTLLFYPASFSPDTRRTY) constitute a mitochondrion transit peptide. Residue 59 to 83 (LVTGCDSGFGFSLAKHLHSKGFLVF) coordinates NAD(+). K73 bears the N6-acetyllysine mark. N6-acetyllysine; alternate is present on K103. K103 is subject to N6-succinyllysine; alternate. N6-acetyllysine occurs at positions 132 and 177. S195 is a binding site for substrate. The active-site Proton acceptor is Y208. The residue at position 212 (K212) is an N6-acetyllysine. S219 carries O-linked (GlcNAc) serine glycosylation. S246 carries the post-translational modification Phosphoserine. The residue at position 258 (K258) is an N6-acetyllysine. At K259 the chain carries N6-acetyllysine; alternate. K259 carries the post-translational modification N6-succinyllysine; alternate. Residue K280 is modified to N6-acetyllysine.

Belongs to the short-chain dehydrogenases/reductases (SDR) family. Homotetramer. In terms of tissue distribution, expressed in liver.

It localises to the mitochondrion inner membrane. Its subcellular location is the mitochondrion matrix. It catalyses the reaction (R)-3-hydroxybutanoate + NAD(+) = acetoacetate + NADH + H(+). Its activity is regulated as follows. Requires phosphatidylcholine as an allosteric activator for enzymatic activity. This is D-beta-hydroxybutyrate dehydrogenase, mitochondrial from Rattus norvegicus (Rat).